Reading from the N-terminus, the 290-residue chain is Lipoyl synthase (290 aa).

[4Fe-4S] cluster-binding residues include cysteine 32, cysteine 37, cysteine 43, cysteine 58, cysteine 62, cysteine 65, and serine 272. The region spanning 44–261 (WGEGTATFMI…KEVAVSLGFK (218 aa)) is the Radical SAM core domain.

The protein belongs to the radical SAM superfamily. Lipoyl synthase family. It depends on [4Fe-4S] cluster as a cofactor.

It localises to the cytoplasm. It carries out the reaction [[Fe-S] cluster scaffold protein carrying a second [4Fe-4S](2+) cluster] + N(6)-octanoyl-L-lysyl-[protein] + 2 oxidized [2Fe-2S]-[ferredoxin] + 2 S-adenosyl-L-methionine + 4 H(+) = [[Fe-S] cluster scaffold protein] + N(6)-[(R)-dihydrolipoyl]-L-lysyl-[protein] + 4 Fe(3+) + 2 hydrogen sulfide + 2 5'-deoxyadenosine + 2 L-methionine + 2 reduced [2Fe-2S]-[ferredoxin]. The protein operates within protein modification; protein lipoylation via endogenous pathway; protein N(6)-(lipoyl)lysine from octanoyl-[acyl-carrier-protein]: step 2/2. Functionally, catalyzes the radical-mediated insertion of two sulfur atoms into the C-6 and C-8 positions of the octanoyl moiety bound to the lipoyl domains of lipoate-dependent enzymes, thereby converting the octanoylated domains into lipoylated derivatives. The sequence is that of Lipoyl synthase from Pyrobaculum aerophilum (strain ATCC 51768 / DSM 7523 / JCM 9630 / CIP 104966 / NBRC 100827 / IM2).